The chain runs to 560 residues: Formate--tetrahydrofolate ligase (560 aa).

An ATP-binding site is contributed by 69–76 (TPAGEGKS).

Belongs to the formate--tetrahydrofolate ligase family.

The enzyme catalyses (6S)-5,6,7,8-tetrahydrofolate + formate + ATP = (6R)-10-formyltetrahydrofolate + ADP + phosphate. Its pathway is one-carbon metabolism; tetrahydrofolate interconversion. This Listeria innocua serovar 6a (strain ATCC BAA-680 / CLIP 11262) protein is Formate--tetrahydrofolate ligase.